The primary structure comprises 183 residues: Putative NAD(P)H nitroreductase YdjA (183 aa).

Residues 10 to 12 (RRS), R35, and H39 contribute to the FMN site. 121–126 (AAVAQG) contacts NAD(+). Residue 131 to 133 (WRS) coordinates FMN.

It belongs to the nitroreductase family. Homodimer. FMN serves as cofactor.

This chain is Putative NAD(P)H nitroreductase YdjA (ydjA), found in Escherichia coli O157:H7.